Here is a 295-residue protein sequence, read N- to C-terminus: (R)-phenoxypropionate/alpha-ketoglutarate-dioxygenase (295 aa).

Fe cation-binding residues include His111 and Asp113. 2 residues coordinate 2-oxoglutarate: Thr138 and Trp255. His270 contributes to the Fe cation binding site. 2-oxoglutarate is bound at residue Arg281.

Belongs to the TfdA dioxygenase family. As to quaternary structure, homotrimer. Requires Fe cation as cofactor. L-ascorbate is required as a cofactor.

It carries out the reaction (R)-2-(4-chloro-2-methylphenoxy)propanoate + 2-oxoglutarate + O2 = 2-methyl-4-chlorophenol + pyruvate + succinate + CO2. The catalysed reaction is (R)-(2,4-dichlorophenoxy)propanoate + 2-oxoglutarate + O2 = 2,4-dichlorophenol + pyruvate + succinate + CO2. Its pathway is xenobiotic degradation; 2-(2,4-dichlorophenoxy)propanoate degradation. Its activity is regulated as follows. Inhibited by divalent cations, most significantly by copper and nickel, and by diethylpyrocarbonate (DEPC). Its function is as follows. Involved in the degradation of the phenoxypropionate herbicides. Catalyzes the enantiospecific cleavage of the ether bond in the herbicid R-dichlorprop ((R)-2-(2,4-dichlorophenoxy)propionate)(R-2,4-DP) and R-mecoprop ((R)-2-(4-chloro-2-methylphenoxy)propionate)(R-2,4-MCPP). It can also accept (RS)-2-(2,4,5-trichlorophenoxy)propionate, (RS)-2-(4-chlorophenoxy)propionate, (RS)-2-(m-chlorophenoxy)propionate, however it can only accept 2-oxoglutarate as oxygen acceptor. The sequence is that of (R)-phenoxypropionate/alpha-ketoglutarate-dioxygenase from Delftia acidovorans (Pseudomonas acidovorans).